We begin with the raw amino-acid sequence, 264 residues long: Indole-3-glycerol phosphate synthase (264 aa).

It belongs to the TrpC family.

It catalyses the reaction 1-(2-carboxyphenylamino)-1-deoxy-D-ribulose 5-phosphate + H(+) = (1S,2R)-1-C-(indol-3-yl)glycerol 3-phosphate + CO2 + H2O. Its pathway is amino-acid biosynthesis; L-tryptophan biosynthesis; L-tryptophan from chorismate: step 4/5. The protein is Indole-3-glycerol phosphate synthase of Carboxydothermus hydrogenoformans (strain ATCC BAA-161 / DSM 6008 / Z-2901).